Consider the following 495-residue polypeptide: SH2 domain-containing adapter protein E (495 aa).

Disordered regions lie at residues threonine 51–lysine 190, aspartate 203–aspartate 233, and leucine 256–glutamine 327. Phosphoserine is present on serine 107. The span at threonine 135–isoleucine 144 shows a compositional bias: polar residues. Over residues isoleucine 148 to glycine 157 the composition is skewed to basic and acidic residues. Low complexity predominate over residues proline 162–serine 181. Basic and acidic residues-rich tracts occupy residues tyrosine 208 to glutamate 224 and proline 301 to glutamine 327. An SH2 domain is found at tryptophan 395–valine 490.

The protein is SH2 domain-containing adapter protein E (SHE) of Homo sapiens (Human).